A 493-amino-acid polypeptide reads, in one-letter code: Chaperone SurA (493 aa).

An N-terminal signal peptide occupies residues 1–33; it reads MKRQAFSLLSRLNPWQQLLLSAVLVTLAAPAAA. The interval 46–76 is disordered; that stretch reads FTQQGSQSASQGSTVAPSQPMMGVPQPSSQP. The segment covering 48–58 has biased composition (low complexity); it reads QQGSQSASQGS. PpiC domains lie at 230–332 and 346–444; these read PTEF…KLVS and IAQT…QVEN.

Its subcellular location is the periplasm. The catalysed reaction is [protein]-peptidylproline (omega=180) = [protein]-peptidylproline (omega=0). Functionally, chaperone involved in the correct folding and assembly of outer membrane proteins. Recognizes specific patterns of aromatic residues and the orientation of their side chains, which are found more frequently in integral outer membrane proteins. May act in both early periplasmic and late outer membrane-associated steps of protein maturation. This is Chaperone SurA from Cupriavidus metallidurans (strain ATCC 43123 / DSM 2839 / NBRC 102507 / CH34) (Ralstonia metallidurans).